Here is a 145-residue protein sequence, read N- to C-terminus: Venom protein 30.1 (145 aa).

The N-terminal stretch at 1–18 (MIIVKLFTCLLMVSSVLT) is a signal peptide.

Contains 5 disulfide bonds. Expressed by the venom gland.

The protein localises to the secreted. This is Venom protein 30.1 from Lychas mucronatus (Chinese swimming scorpion).